The primary structure comprises 372 residues: DNA replication and repair protein RecF (372 aa).

Position 30 to 37 (30 to 37 (GENAQGKT)) interacts with ATP.

It belongs to the RecF family.

It is found in the cytoplasm. Functionally, the RecF protein is involved in DNA metabolism; it is required for DNA replication and normal SOS inducibility. RecF binds preferentially to single-stranded, linear DNA. It also seems to bind ATP. The sequence is that of DNA replication and repair protein RecF from Shouchella clausii (strain KSM-K16) (Alkalihalobacillus clausii).